Reading from the N-terminus, the 674-residue chain is MNDMTLYLIIALVPLAGSLIAGLFGNKIGRAGAHTVTILGVAVSAVLSAYVLWGFLNGSRAKFDENVYTWLTMGGLDFSVGFLVDTMTAMMMVVVTGVSLMVHIYTIGYMHDEKVGYQRFFSYISLFTFSMLMLIMSNNFIQLFFGWEAVGLVSYLLIGFYFKRPSATFANLKAFLINRVGDFGFLLGIGLVLAYFGGSLRYQDVFAYLPNVQNATIQLFPGVEWSLITVTCLLLFVGAMGKSAQFPLHVWLPDSMEGPTPISALIHAATMVTAGLFMVSRMSPIYEMSSTALSVIMVIGAITALFMGFLGVIQNDIKRVVAYSTLSQLGYMTVALGASAYSVAMFHVMTHAFFKALLFLAAGSAIIGMHHDQDMRHMGNLKKYMPITWLTMLIGNLSLIGTPFFSGFYSKDSIIEAAKYSTLPGSGFAYFAVLASVFVTAFYAFRQYFMVFHGEEKWRSLPEHHSDGHGEEHHGLGKNDNPHESPLVVTLPLILLAVPSVIIGYIAIEPMLYGDFFKDVIFVNADAHPTMHIMKEEFHGALAMVSHSLHSPVLYLAIAGVLSAWLLYVKLPHLPAKIAQAFRPVYVLFENKYYLDALYFNVFAKGTRALGTFFWKVGDTAIIDNGIVNGSARLVGAVAAQVRKVQTGFIYTYAAAMVFGVLVLLGMTFWGLFR.

Transmembrane regions (helical) follow at residues 4 to 24, 36 to 56, 67 to 87, 90 to 110, 115 to 135, 140 to 160, 180 to 200, 219 to 239, 259 to 279, 293 to 313, 348 to 368, 385 to 405, 425 to 445, 488 to 508, 549 to 569, and 653 to 673; these read MTLY…AGLF, VTIL…WGFL, VYTW…VDTM, MMMV…IGYM, VGYQ…LMLI, FIQL…LIGF, VGDF…GGSL, LFPG…FVGA, PTPI…LFMV, LSVI…LGVI, VMTH…AIIG, MPIT…TPFF, GSGF…FYAF, VVTL…YIAI, LHSP…LLYV, and YAAA…WGLF.

The protein belongs to the complex I subunit 5 family.

It localises to the cell membrane. It catalyses the reaction a quinone + NADH + 5 H(+)(in) = a quinol + NAD(+) + 4 H(+)(out). In terms of biological role, NDH-1 shuttles electrons from NADH, via FMN and iron-sulfur (Fe-S) centers, to quinones in the respiratory chain. The immediate electron acceptor for the enzyme in this species is believed to be ubiquinone. Couples the redox reaction to proton translocation (for every two electrons transferred, four hydrogen ions are translocated across the cytoplasmic membrane), and thus conserves the redox energy in a proton gradient. The chain is NADH-quinone oxidoreductase subunit L (nuoL) from Neisseria meningitidis serogroup A / serotype 4A (strain DSM 15465 / Z2491).